The following is a 79-amino-acid chain: Alpha-elapitoxin-Aa2e (79 aa).

5 cysteine pairs are disulfide-bonded: cysteine 3/cysteine 20, cysteine 13/cysteine 41, cysteine 26/cysteine 30, cysteine 45/cysteine 56, and cysteine 57/cysteine 62.

This sequence belongs to the three-finger toxin family. Long-chain subfamily. Type II alpha-neurotoxin sub-subfamily. Expressed by the venom gland.

It localises to the secreted. In terms of biological role, binds with high affinity to muscular (alpha-1/CHRNA1) and neuronal (alpha-7/CHRNA7) nicotinic acetylcholine receptor (nAChR) and inhibits acetylcholine from binding to the receptor, thereby impairing neuromuscular and neuronal transmission. Produces paralysis, clear dyspnea and lethality on mice. This Acanthophis antarcticus (Common death adder) protein is Alpha-elapitoxin-Aa2e.